The sequence spans 181 residues: Ribulose bisphosphate carboxylase small subunit, chloroplastic 6 (181 aa).

The N-terminal 57 residues, 1 to 57 (MASSIVSSAAVATRSNVAQASMVAPFTGLKSAASFPVTKKNNNVDITSLASNGGRVR), are a transit peptide targeting the chloroplast.

It belongs to the RuBisCO small chain family. Heterohexadecamer of 8 large and 8 small subunits.

The protein localises to the plastid. It is found in the chloroplast. Functionally, ruBisCO catalyzes two reactions: the carboxylation of D-ribulose 1,5-bisphosphate, the primary event in carbon dioxide fixation, as well as the oxidative fragmentation of the pentose substrate. Both reactions occur simultaneously and in competition at the same active site. Although the small subunit is not catalytic it is essential for maximal activity. The sequence is that of Ribulose bisphosphate carboxylase small subunit, chloroplastic 6 from Solanum tuberosum (Potato).